Reading from the N-terminus, the 183-residue chain is Glutamyl-tRNA(Gln) amidotransferase subunit F, mitochondrial (183 aa).

The protein belongs to the GatF family. Subunit of the heterotrimeric GatFAB amidotransferase (AdT) complex, composed of A (HER2), B (PET112) and F (YGR102C) subunits.

It localises to the mitochondrion inner membrane. The enzyme catalyses L-glutamyl-tRNA(Gln) + L-glutamine + ATP + H2O = L-glutaminyl-tRNA(Gln) + L-glutamate + ADP + phosphate + H(+). Functionally, allows the formation of correctly charged Gln-tRNA(Gln) through the transamidation of misacylated Glu-tRNA(Gln) in the mitochondria. The reaction takes place in the presence of glutamine and ATP through an activated gamma-phospho-Glu-tRNA(Gln). Required for proper protein synthesis within the mitochondrion. The polypeptide is Glutamyl-tRNA(Gln) amidotransferase subunit F, mitochondrial (Saccharomyces cerevisiae (strain ATCC 204508 / S288c) (Baker's yeast)).